The sequence spans 987 residues: Mediator of RNA polymerase II transcription subunit 24 (987 aa).

Short sequence motifs (LXXLL motif) lie at residues 128-132 (LHWLL), 344-348 (LTPLL), 446-450 (LDLLL), 555-559 (LVALL), 786-790 (LPGLL), and 855-859 (LMRLL). Residues Ser-860 and Ser-871 each carry the phosphoserine modification.

It belongs to the Mediator complex subunit 24 family. As to quaternary structure, component of the Mediator complex, which is composed of MED1, MED4, MED6, MED7, MED8, MED9, MED10, MED11, MED12, MED13, MED13L, MED14, MED15, MED16, MED17, MED18, MED19, MED20, MED21, MED22, MED23, MED24, MED25, MED26, MED27, MED29, MED30, MED31, CCNC, CDK8 and CDC2L6/CDK11. The MED12, MED13, CCNC and CDK8 subunits form a distinct module termed the CDK8 module. Mediator containing the CDK8 module is less active than Mediator lacking this module in supporting transcriptional activation. Individual preparations of the Mediator complex lacking one or more distinct subunits have been variously termed ARC, CRSP, DRIP, PC2, SMCC and TRAP. Interacts with AR. Interacts with MED1 and MED10. In terms of tissue distribution, expressed in the adrenal gland, brain, epididymis, heart, kidney, liver, ovary, pancreas, prostate, skeletal muscle, small intestine, spleen, stomach, testis and thymus.

The protein localises to the nucleus. In terms of biological role, component of the Mediator complex, a coactivator involved in the regulated transcription of nearly all RNA polymerase II-dependent genes. Mediator functions as a bridge to convey information from gene-specific regulatory proteins to the basal RNA polymerase II transcription machinery. Mediator is recruited to promoters by direct interactions with regulatory proteins and serves as a scaffold for the assembly of a functional preinitiation complex with RNA polymerase II and the general transcription factors. Required for basal and activator-dependent transcription. The chain is Mediator of RNA polymerase II transcription subunit 24 (Med24) from Mus musculus (Mouse).